The chain runs to 321 residues: Basic peroxidase (321 aa).

Positions 1–30 are cleaved as a signal peptide; it reads MSYHKSSGTILMVPLFMLLISVNYFMSCNA. Gln31 is modified (pyrrolidone carboxylic acid). Cystine bridges form between Cys41–Cys117, Cys74–Cys79, Cys123–Cys317, and Cys202–Cys228. His72 serves as the catalytic Proton acceptor. Ca(2+)-binding residues include Asp73, Val76, Gly78, Asp80, and Ser82. Position 165 (Pro165) interacts with substrate. His195 contacts heme b. Thr196 lines the Ca(2+) pocket. Residues Asn211 and Asn221 are each glycosylated (N-linked (GlcNAc...) asparagine). Ca(2+) is bound by residues Asp241, Thr244, and Asp249.

The protein belongs to the peroxidase family. Classical plant (class III) peroxidase subfamily. Heme b is required as a cofactor. Requires Ca(2+) as cofactor. Post-translationally, N-glycosylated. As to expression, expressed in tracheary elements, roots, young and old hypocotyls, and stems in the partially glycosylated form and in roots and young hypocotyls in the fully glycosylated form. None of the isoforms is significantly expressed in leaves or cotyledons.

The protein localises to the secreted. It catalyses the reaction 2 a phenolic donor + H2O2 = 2 a phenolic radical donor + 2 H2O. In terms of biological role, removal of H(2)O(2), oxidation of toxic reductants, biosynthesis and degradation of lignin, suberization, auxin catabolism, response to environmental stresses such as wounding, pathogen attack and oxidative stress. These functions might be dependent on each isozyme/isoform in each plant tissue. Involved in the synthesis of highly polymerized lignins. The polypeptide is Basic peroxidase (POD1) (Zinnia elegans (Garden zinnia)).